The primary structure comprises 149 residues: Nucleoside diphosphate kinase (149 aa).

Positions 9, 57, 85, 91, 102, and 112 each coordinate ATP. Catalysis depends on H115, which acts as the Pros-phosphohistidine intermediate.

The protein belongs to the NDK family. Mg(2+) is required as a cofactor.

It localises to the cytoplasm. The enzyme catalyses a 2'-deoxyribonucleoside 5'-diphosphate + ATP = a 2'-deoxyribonucleoside 5'-triphosphate + ADP. It carries out the reaction a ribonucleoside 5'-diphosphate + ATP = a ribonucleoside 5'-triphosphate + ADP. In terms of biological role, major role in the synthesis of nucleoside triphosphates other than ATP. The ATP gamma phosphate is transferred to the NDP beta phosphate via a ping-pong mechanism, using a phosphorylated active-site intermediate. This Methanospirillum hungatei JF-1 (strain ATCC 27890 / DSM 864 / NBRC 100397 / JF-1) protein is Nucleoside diphosphate kinase.